Reading from the N-terminus, the 518-residue chain is MADNIIIFDTTLRDGEQALKASLTVKEKLQIAFALERLGVDVMEVGFPISSAGDFESVQTIARHIKHSRVCALSRAVDKDIDAAAEALKVAEAFRIHTFIATSALHVEAKLRRTFEDVVDMAINAVKRARNYTDDVEFSCEDAGRTGVDNICRIVEAAIKAGATTVNIPDTVGYCLPYQYGDIIANVMNRVPNIDKAIISVHCHNDLGMATANSLTAVQNGARQIECTINGIGERAGNTALEEVVMAIKTRQDMFNGLDTRINTQEIHRVSQMVSQLCNMPIQPNKAIVGSNAFAHSSGIHQDGMVKHKNTYEIMSPESIGLKKEKLNLTARSGRAAVKNHMSEMGYQESDYDLDKLYEAFLKLADKKGQVFDYDLEALAFIDMQQGDEDRLTLDVITSQCISHLPASAFVQVELDGKKMSQVSNGGNGPVDAVYNAILAITGLEMKMLNYNLTAKGEGAEALGQVDIVVEHEGRRFHGVGLATDIVESSARALIHAINAIYRSQKVADLKLHKIAGV.

A Pyruvate carboxyltransferase domain is found at 5–268 (IIIFDTTLRD…DTRINTQEIH (264 aa)). Positions 14, 202, 204, and 238 each coordinate Mn(2+). The tract at residues 393–518 (TLDVITSQCI…DLKLHKIAGV (126 aa)) is regulatory domain.

Belongs to the alpha-IPM synthase/homocitrate synthase family. LeuA type 1 subfamily. Homodimer. It depends on Mn(2+) as a cofactor.

It is found in the cytoplasm. It carries out the reaction 3-methyl-2-oxobutanoate + acetyl-CoA + H2O = (2S)-2-isopropylmalate + CoA + H(+). It participates in amino-acid biosynthesis; L-leucine biosynthesis; L-leucine from 3-methyl-2-oxobutanoate: step 1/4. Its function is as follows. Catalyzes the condensation of the acetyl group of acetyl-CoA with 3-methyl-2-oxobutanoate (2-ketoisovalerate) to form 3-carboxy-3-hydroxy-4-methylpentanoate (2-isopropylmalate). The protein is 2-isopropylmalate synthase of Pasteurella multocida (strain Pm70).